The following is a 467-amino-acid chain: MALQRRFFQFVIITLLIPSFILGYTSAVHEDPPHDYHLEEYGYDFKAYPSYITTIGDNDFGSSMSHENGIFGLRKVDYGMDRVLDASKTVNVDDFGAKGDGRDDTKAFEKAWKAACSSTSSAVLLVPKKNYLVRPISFSGPCKSGLTMQIYGTIEASDDRSDYRKDGRHWLVFDSVQNLRVEGGGTINGNGKIWWQNSCKTNKALPCKDAPTALTFYKSKHVIVKNLKIENAQQIHVSFDNCVNVQASNLMVTAPENSPNTDGIHVTGTQNIHISSCVIGTGDDCISIVNGSRKVRVNDITCGPGHGISIGSLGYGNSEAHVSDVVVNGAKLCGTTNGVRIKTWQGGSGSASNIKFQNVEMHNVENPIIIDQNYCDQDKPCQEQSSAVQVKNVVYQNIKGTCASNVAITFDCSKRFPCQGIVLEDVDLEIEGGAAAKALCNNVELSETGVVSPHCQEEGGEEEEEAS.

Residues 1–27 form the signal peptide; that stretch reads MALQRRFFQFVIITLLIPSFILGYTSA. D283 serves as the catalytic Proton donor. N290 carries N-linked (GlcNAc...) asparagine glycosylation. H306 is an active-site residue.

Belongs to the glycosyl hydrolase 28 family.

It localises to the secreted. The protein localises to the cell wall. The enzyme catalyses (1,4-alpha-D-galacturonosyl)n+m + H2O = (1,4-alpha-D-galacturonosyl)n + (1,4-alpha-D-galacturonosyl)m.. Its function is as follows. Acts in concert with the pectinesterase, in the ripening process. Is involved in cell wall metabolism, specifically in polyuronide degradation. The polypeptide is Polygalacturonase (Actinidia deliciosa (Kiwi)).